The following is a 135-amino-acid chain: Small ribosomal subunit protein bS18 (135 aa).

The disordered stretch occupies residues 1–65 (MARPDMGGPK…GDEGGGRRGF (65 aa)). Residues 9 to 41 (PKTGGFGGPRSGGFGGGGGGGGGFGGGGFGGGR) show a composition bias toward gly residues. Over residues 42 to 61 (GGDRGDRGDRDDRGGDEGGG) the composition is skewed to basic and acidic residues.

This sequence belongs to the bacterial ribosomal protein bS18 family. As to quaternary structure, part of the 30S ribosomal subunit. Forms a tight heterodimer with protein bS6.

Functionally, binds as a heterodimer with protein bS6 to the central domain of the 16S rRNA, where it helps stabilize the platform of the 30S subunit. This chain is Small ribosomal subunit protein bS18, found in Anaeromyxobacter sp. (strain K).